The primary structure comprises 250 residues: 5'-nucleotidase SurE (250 aa).

The a divalent metal cation site is built by Asp-8, Asp-9, Ser-39, and Asn-91.

The protein belongs to the SurE nucleotidase family. A divalent metal cation serves as cofactor.

It is found in the cytoplasm. It carries out the reaction a ribonucleoside 5'-phosphate + H2O = a ribonucleoside + phosphate. Its function is as follows. Nucleotidase that shows phosphatase activity on nucleoside 5'-monophosphates. The sequence is that of 5'-nucleotidase SurE from Leptospira borgpetersenii serovar Hardjo-bovis (strain JB197).